The sequence spans 471 residues: Variant surface glycoprotein ILTAT 1.1BC (471 aa).

The N-terminal stretch at Met1–Ala21 is a signal peptide. Residue Asn130 is glycosylated (N-linked (GlcNAc...) asparagine). Residues Thr158–Glu168 show a composition bias toward polar residues. 2 disordered regions span residues Thr158–Lys183 and Gly204–Ser232. A compositionally biased stretch (basic and acidic residues) spans Asp214–Asn226. N-linked (GlcNAc...) asparagine glycans are attached at residues Asn220 and Asn260. Disulfide bonds link Cys397/Cys410 and Cys406/Cys421. Residues Ala432–Ser454 are disordered. Asn450 carries an N-linked (GlcNAc...) asparagine glycan. The GPI-anchor amidated serine moiety is linked to residue Ser454. A propeptide spans Asn455 to Leu471 (removed in mature form).

It localises to the cell membrane. Functionally, VSG forms a coat on the surface of the parasite. The trypanosome evades the immune response of the host by expressing a series of antigenically distinct VSGs from an estimated 1000 VSG genes. The protein is Variant surface glycoprotein ILTAT 1.1BC of Trypanosoma brucei brucei.